Consider the following 444-residue polypeptide: Ribosome biogenesis protein YTM1 (444 aa).

The tract at residues 8 to 89 is ubiquitin-like (UBL) domain; it reads VKLRFFTREE…ETFLNVEYTR (82 aa). 7 WD repeats span residues 99–138, 140–178, 194–231, 269–309, 311–350, 357–397, and 408–444; these read SFDN…EKQY, GHSG…LKSI, GHKA…MTVI, SHSA…CVDT, TTSY…SSKI, GHKN…AMYT, and GVND…IFSN. The sufficient for interaction with ERB1 and association with 66S pre-ribosomes stretch occupies residues 99–444; that stretch reads SFDNEDWVSS…INKGDNIFSN (346 aa).

This sequence belongs to the WD repeat WDR12/YTM1 family. In terms of assembly, component of the NOP7 complex, composed of ERB1, NOP7 and YTM1. The complex is held together by ERB1, which interacts with NOP7 via its N-terminal domain and with YTM1 via a high-affinity interaction between the seven-bladed beta-propeller domains of the 2 proteins. The NOP7 complex associates with the 66S pre-ribosome. Interacts (via UBL domain) with MDN1 (via VWFA/MIDAS domain).

It is found in the nucleus. Its subcellular location is the nucleolus. The protein resides in the nucleoplasm. In terms of biological role, component of the NOP7 complex, which is required for maturation of the 25S and 5.8S ribosomal RNAs and formation of the 60S ribosome. The polypeptide is Ribosome biogenesis protein YTM1 (Kluyveromyces lactis (strain ATCC 8585 / CBS 2359 / DSM 70799 / NBRC 1267 / NRRL Y-1140 / WM37) (Yeast)).